The primary structure comprises 347 residues: MLEACESKLDIIKNFVPSWFAAVMGTGILAVDSLLYSSYLPILKDVAVGLFYFNVLLFFIFLVPWVLRWIMFKDNALADLKHPVLSAFYPTIAVSCLVLGADFINIGHNMFWGGVFWTLGAIGMFLFSLIVPFYMFKSESIKLDHVNPGWYIPPVGLIVIPIAGSLIMPHLTGVWHELTVLINYFGWGAGFFLYLALLAVVIYRFILHHPLPSAMAPTVWINLGPIGAGIVALINMVNNSPFITIKEPFYIFSFIFWGFGLWWSLMAIIMTLYYVKKLKLPYAMSWWAFIFPLGAYVASSHLVYKIFKFSIIDYIGFGLYWLLFFFWAITLIKTTNKVYTGEVFKGH.

A run of 10 helical transmembrane segments spans residues Phe15–Leu35, Val46–Val66, Val84–Ile104, Phe111–Val131, Gly149–Pro169, Ile182–Ile202, Ala214–Ile234, Phe249–Ile269, Ala283–Val303, and Ile312–Ile332.

Belongs to the tellurite-resistance/dicarboxylate transporter (TDT) family.

The protein localises to the cell membrane. This is an uncharacterized protein from Methanocaldococcus jannaschii (strain ATCC 43067 / DSM 2661 / JAL-1 / JCM 10045 / NBRC 100440) (Methanococcus jannaschii).